Consider the following 152-residue polypeptide: UPF0225 protein KPK_2103 (152 aa).

The protein belongs to the UPF0225 family.

In Klebsiella pneumoniae (strain 342), this protein is UPF0225 protein KPK_2103.